A 608-amino-acid chain; its full sequence is Bifunctional dihydrofolate reductase-thymidylate synthase (608 aa).

Residues 10–228 enclose the DHFR domain; the sequence is DIYAICACCK…TTLDFIIYKK (219 aa). 14–15 lines the substrate pocket; the sequence is IC. Ala16 is a binding site for NADP(+). Residue Val31 coordinates substrate. 39 to 45 lines the NADP(+) pocket; that stretch reads GLGNKGV. Asp54 and Asn108 together coordinate substrate. NADP(+) is bound by residues 106 to 108, 128 to 130, and Asn144; these read RTN and SRT. 3 residues coordinate substrate: Ile164, Tyr170, and Thr185. 165–172 is a binding site for NADP(+); sequence GGSVVYQE. Residues 322-608 are thymidylate synthase; that stretch reads YHPEYQYLNI…HEKISMDMAA (287 aa). Arg345 serves as a coordination point for dUMP. Cys490 is an active-site residue. Residues His491, 509-513, Asn521, and 551-553 contribute to the dUMP site; these read QRSCD and HVY.

The protein in the N-terminal section; belongs to the dihydrofolate reductase family. In the C-terminal section; belongs to the thymidylate synthase family. In terms of assembly, homodimer.

The enzyme catalyses (6S)-5,6,7,8-tetrahydrofolate + NADP(+) = 7,8-dihydrofolate + NADPH + H(+). It catalyses the reaction dUMP + (6R)-5,10-methylene-5,6,7,8-tetrahydrofolate = 7,8-dihydrofolate + dTMP. The protein operates within cofactor biosynthesis; tetrahydrofolate biosynthesis; 5,6,7,8-tetrahydrofolate from 7,8-dihydrofolate: step 1/1. Bifunctional enzyme. Involved in de novo dTMP biosynthesis. Key enzyme in folate metabolism. Catalyzes an essential reaction for de novo glycine and purine synthesis, DNA precursor synthesis, and for the conversion of dUMP to dTMP. This Plasmodium falciparum (isolate K1 / Thailand) protein is Bifunctional dihydrofolate reductase-thymidylate synthase.